The sequence spans 219 residues: Transmembrane protein 179B (219 aa).

The next 4 helical transmembrane spans lie at 6–26, 69–89, 105–125, and 167–187; these read PLLL…ITAA, ISVC…YIAF, LGLS…LKIG, and AETA…LVLI. Residues 195–219 form a disordered region; it reads IRPGTEDPSAPPSETEPFFNRPGRP.

The protein belongs to the TMEM179 family.

The protein resides in the membrane. The protein is Transmembrane protein 179B (tmem179b) of Danio rerio (Zebrafish).